A 542-amino-acid chain; its full sequence is Putative sodium-dependent excitatory amino acid transporter glt-6 (542 aa).

Over 1 to 15 (MKSKRRDDIVQFCRE) the chain is Cytoplasmic. The next 3 membrane-spanning stretches (helical) occupy residues 16–36 (NTLL…GFGL), 55–75 (IFMQ…LISA), and 93–113 (LYYL…VTVI). Topologically, residues 114-191 (HPGDPSIKGT…IVKRSIGMTK (78 aa)) are extracellular. An N-linked (GlcNAc...) asparagine glycan is attached at N175. 5 helical membrane-spanning segments follow: residues 192 to 212 (GMNI…ISQL), 234 to 254 (VVTL…GNLL), 265 to 285 (VLAL…IITV), 303 to 323 (GMIQ…TLPM), and 386 to 406 (TIAS…LLIL). Positions 505–517 (RIGSRIGSRRPSS) are enriched in low complexity. Residues 505-542 (RIGSRIGSRRPSSTNLHLSWRNNNIEPPYTPLPNDENV) form a disordered region. Positions 518-529 (TNLHLSWRNNNI) are enriched in polar residues.

It belongs to the dicarboxylate/amino acid:cation symporter (DAACS) (TC 2.A.23) family.

The protein resides in the membrane. This chain is Putative sodium-dependent excitatory amino acid transporter glt-6 (glt-6), found in Caenorhabditis elegans.